The sequence spans 246 residues: Probable transcriptional regulatory protein HAPS_0943 (246 aa).

Belongs to the TACO1 family.

The protein resides in the cytoplasm. This is Probable transcriptional regulatory protein HAPS_0943 from Glaesserella parasuis serovar 5 (strain SH0165) (Haemophilus parasuis).